A 128-amino-acid polypeptide reads, in one-letter code: Aspartate 1-decarboxylase (128 aa).

The active-site Schiff-base intermediate with substrate; via pyruvic acid is Ser25. Pyruvic acid (Ser) is present on Ser25. Thr57 lines the substrate pocket. Residue Tyr58 is the Proton donor of the active site. 73 to 75 contributes to the substrate binding site; that stretch reads GAA.

Belongs to the PanD family. As to quaternary structure, heterooctamer of four alpha and four beta subunits. Pyruvate is required as a cofactor. Is synthesized initially as an inactive proenzyme, which is activated by self-cleavage at a specific serine bond to produce a beta-subunit with a hydroxyl group at its C-terminus and an alpha-subunit with a pyruvoyl group at its N-terminus.

Its subcellular location is the cytoplasm. It catalyses the reaction L-aspartate + H(+) = beta-alanine + CO2. It participates in cofactor biosynthesis; (R)-pantothenate biosynthesis; beta-alanine from L-aspartate: step 1/1. Functionally, catalyzes the pyruvoyl-dependent decarboxylation of aspartate to produce beta-alanine. In Chlorobium luteolum (strain DSM 273 / BCRC 81028 / 2530) (Pelodictyon luteolum), this protein is Aspartate 1-decarboxylase.